The sequence spans 292 residues: NAD kinase (292 aa).

Residue Asp72 is the Proton acceptor of the active site. NAD(+) contacts are provided by residues 72 to 73, 146 to 147, His157, Arg174, Asp176, and 187 to 192; these read DG, NE, and TAYSLS.

Belongs to the NAD kinase family. Requires a divalent metal cation as cofactor.

The protein resides in the cytoplasm. It catalyses the reaction NAD(+) + ATP = ADP + NADP(+) + H(+). Involved in the regulation of the intracellular balance of NAD and NADP, and is a key enzyme in the biosynthesis of NADP. Catalyzes specifically the phosphorylation on 2'-hydroxyl of the adenosine moiety of NAD to yield NADP. In Shewanella loihica (strain ATCC BAA-1088 / PV-4), this protein is NAD kinase.